An 89-amino-acid chain; its full sequence is MGFTDETVRFKLDDGDKRQISETLTAVYHSLDEKGYNPINQIVGYVLSGDPAYVPRYNDARNQIRKYERDEIVEELVRYYLQGNGIDVK.

The protein belongs to the UPF0297 family.

In Streptococcus pyogenes serotype M12 (strain MGAS9429), this protein is UPF0297 protein MGAS9429_Spy1808.